Consider the following 362-residue polypeptide: Peptide chain release factor 1 (362 aa).

Q235 is modified (N5-methylglutamine).

The protein belongs to the prokaryotic/mitochondrial release factor family. In terms of processing, methylated by PrmC. Methylation increases the termination efficiency of RF1.

It localises to the cytoplasm. Functionally, peptide chain release factor 1 directs the termination of translation in response to the peptide chain termination codons UAG and UAA. This Acinetobacter baumannii (strain ACICU) protein is Peptide chain release factor 1.